We begin with the raw amino-acid sequence, 712 residues long: Polyribonucleotide nucleotidyltransferase (712 aa).

The Mg(2+) site is built by Asp-493 and Asp-499. In terms of domain architecture, KH spans Pro-560–Ile-622. Positions Gly-632 to Lys-700 constitute an S1 motif domain.

It belongs to the polyribonucleotide nucleotidyltransferase family. It depends on Mg(2+) as a cofactor.

The protein localises to the cytoplasm. It carries out the reaction RNA(n+1) + phosphate = RNA(n) + a ribonucleoside 5'-diphosphate. Involved in mRNA degradation. Catalyzes the phosphorolysis of single-stranded polyribonucleotides processively in the 3'- to 5'-direction. In Salinibacter ruber (strain DSM 13855 / M31), this protein is Polyribonucleotide nucleotidyltransferase.